A 454-amino-acid chain; its full sequence is Nuclear envelope integral membrane protein (454 aa).

An N-terminal signal peptide occupies residues 1 to 18 (MHSAGLLMLTVAGYFTSG). Asparagine 38 carries an N-linked (GlcNAc...) asparagine glycan. Helical transmembrane passes span 138–158 (IPLD…LFSA), 166–186 (VFYY…VVIY), 197–217 (MMYG…KQLA), 231–251 (VLGY…RIGP), and 280–300 (TSAV…PISW). Over residues 388-405 (SMDAAPEEESVEEPEEDK) the composition is skewed to acidic residues. The interval 388 to 454 (SMDAAPEEES…QEVDLRQVVQ (67 aa)) is disordered. Residues 414-424 (NSQFRYQQAAR) show a composition bias toward polar residues. The span at 428-446 (PEPESESDDSEEEEFFEQE) shows a compositional bias: acidic residues.

It belongs to the NEMP family. In terms of assembly, interacts with OTE. Expressed in both germline and somatic cells in the larval testis and prepupal ovary (at protein level). Also detected in the larval eye and larval wing disk (at protein level).

Its subcellular location is the nucleus inner membrane. Functionally, contributes to nuclear envelope stiffness in germ cells. Required for male and female fertility. The sequence is that of Nuclear envelope integral membrane protein from Drosophila melanogaster (Fruit fly).